Here is a 293-residue protein sequence, read N- to C-terminus: Formamidopyrimidine-DNA glycosylase (293 aa).

Catalysis depends on Pro2, which acts as the Schiff-base intermediate with DNA. Glu3 serves as the catalytic Proton donor. Lys58 (proton donor; for beta-elimination activity) is an active-site residue. The DNA site is built by His104, Arg123, and Lys166. The segment at 257–293 (AAYDREGERCRTDGCGGAVKRFVQNGRSTFWCSGCQK) adopts an FPG-type zinc-finger fold. Residue Arg283 is the Proton donor; for delta-elimination activity of the active site.

Belongs to the FPG family. Monomer. It depends on Zn(2+) as a cofactor.

The catalysed reaction is Hydrolysis of DNA containing ring-opened 7-methylguanine residues, releasing 2,6-diamino-4-hydroxy-5-(N-methyl)formamidopyrimidine.. The enzyme catalyses 2'-deoxyribonucleotide-(2'-deoxyribose 5'-phosphate)-2'-deoxyribonucleotide-DNA = a 3'-end 2'-deoxyribonucleotide-(2,3-dehydro-2,3-deoxyribose 5'-phosphate)-DNA + a 5'-end 5'-phospho-2'-deoxyribonucleoside-DNA + H(+). Its function is as follows. Involved in base excision repair of DNA damaged by oxidation or by mutagenic agents. Acts as a DNA glycosylase that recognizes and removes damaged bases. Has a preference for oxidized purines, such as 7,8-dihydro-8-oxoguanine (8-oxoG). Has AP (apurinic/apyrimidinic) lyase activity and introduces nicks in the DNA strand. Cleaves the DNA backbone by beta-delta elimination to generate a single-strand break at the site of the removed base with both 3'- and 5'-phosphates. This is Formamidopyrimidine-DNA glycosylase from Rhodopseudomonas palustris (strain BisB5).